A 294-amino-acid polypeptide reads, in one-letter code: 2-hydroxy-3-oxopropionate reductase (294 aa).

NAD(+) is bound by residues 4 to 18 (GFIG…MSKN) and Ser-95. Lys-170 is a catalytic residue. Lys-238 serves as a coordination point for NAD(+).

Belongs to the HIBADH-related family. 2-hydroxy-3-oxopropionate reductase subfamily.

It carries out the reaction (R)-glycerate + NADP(+) = 2-hydroxy-3-oxopropanoate + NADPH + H(+). The catalysed reaction is (R)-glycerate + NAD(+) = 2-hydroxy-3-oxopropanoate + NADH + H(+). Its pathway is carbohydrate acid metabolism; galactarate degradation; D-glycerate from galactarate: step 3/3. Its function is as follows. Catalyzes the reduction of tatronate semialdehyde to D-glycerate. This Escherichia coli O6:H1 (strain CFT073 / ATCC 700928 / UPEC) protein is 2-hydroxy-3-oxopropionate reductase.